The chain runs to 369 residues: Actin-related protein T3 (369 aa).

This sequence belongs to the actin family. In terms of assembly, interacts with PFN3. As to expression, testis specific (at protein level). Expressed specifically in haploid germ cells.

The protein resides in the cytoplasm. Its subcellular location is the cytoskeleton. The protein localises to the nucleus. The protein is Actin-related protein T3 (Actrt3) of Mus musculus (Mouse).